A 210-amino-acid polypeptide reads, in one-letter code: Nta operon transcriptional regulator (210 aa).

Positions 1–55 constitute an HTH gntR-type domain; it reads MAVSYHFRPGERINEVELAAQLKVSRTPLREALNRLTTEGFLTTTANKGFFARVL. Residues 15-34 constitute a DNA-binding region (H-T-H motif); that stretch reads EVELAAQLKVSRTPLREALN.

Its function is as follows. Probable regulator for the expression of the NTA monooxygenase subunits. In Aminobacter aminovorans (Chelatobacter heintzii), this protein is Nta operon transcriptional regulator (ntaR).